Consider the following 91-residue polypeptide: Phosphocarrier protein NPr (91 aa).

The region spanning 3–90 (KLERQVTICN…ALVDAKFDEA (88 aa)) is the HPr domain. Histidine 17 functions as the Pros-phosphohistidine intermediate in the catalytic mechanism.

This sequence belongs to the HPr family.

It is found in the cytoplasm. Functionally, component of the phosphoenolpyruvate-dependent nitrogen-metabolic phosphotransferase system (nitrogen-metabolic PTS), that seems to be involved in regulating nitrogen metabolism. The phosphoryl group from phosphoenolpyruvate (PEP) is transferred to the phosphoryl carrier protein NPr by enzyme I-Ntr. Phospho-NPr then transfers it to EIIA-Ntr. Could function in the transcriptional regulation of sigma-54 dependent operons in conjunction with the NPr (PtsO) and EIIA-Ntr (PtsN) proteins. This chain is Phosphocarrier protein NPr (ptsO), found in Shewanella violacea (strain JCM 10179 / CIP 106290 / LMG 19151 / DSS12).